The following is a 272-amino-acid chain: Ribonuclease 3 (272 aa).

Residues 1–22 (MSLQFLRSEASDGAGETSDASS) form a disordered region. Positions 31 to 162 (TATHLARLTG…LVGAIYLDQG (132 aa)) constitute an RNase III domain. Glu-75 contacts Mg(2+). Asp-79 is an active-site residue. The Mg(2+) site is built by Asp-148 and Glu-151. Glu-151 is a catalytic residue. A DRBM domain is found at 189–258 (NYKSRLIEYT…AKEAMKRLES (70 aa)).

It belongs to the ribonuclease III family. As to quaternary structure, homodimer. The cofactor is Mg(2+).

The protein localises to the cytoplasm. The enzyme catalyses Endonucleolytic cleavage to 5'-phosphomonoester.. Digests double-stranded RNA. Involved in the processing of primary rRNA transcript to yield the immediate precursors to the large and small rRNAs (23S and 16S). Processes some mRNAs, and tRNAs when they are encoded in the rRNA operon. Processes pre-crRNA and tracrRNA of type II CRISPR loci if present in the organism. The chain is Ribonuclease 3 from Chlorobaculum tepidum (strain ATCC 49652 / DSM 12025 / NBRC 103806 / TLS) (Chlorobium tepidum).